We begin with the raw amino-acid sequence, 851 residues long: ATP-dependent DNA helicase DDX31 (851 aa).

The segment at 1–196 (MAPDLASQRH…STSDRNQEER (196 aa)) is disordered. The short motif at 230–259 (AAFHELGLHPHLISTINTVLKMSSMTSVQK) is the Q motif element. A Helicase ATP-binding domain is found at 262–443 (IPVLLEGRDA…DISLHDPVSI (182 aa)). 275 to 282 (SQTGSGKT) is a binding site for ATP. The DEAD box signature appears at 388–391 (DEAD). The 180-residue stretch at 480-659 (SLKQHVTVVP…VSEIKMEDIL (180 aa)) folds into the Helicase C-terminal domain. Disordered regions lie at residues 762 to 784 (KKRKAHVKRPDLHKKTQSKHSLA) and 804 to 851 (KQNA…SQKV). The residue at position 828 (R828) is an Omega-N-methylarginine. The segment covering 841–851 (VQRDSKTSQKV) has biased composition (basic and acidic residues).

Belongs to the DEAD box helicase family. DDX31/DBP7 subfamily. Interacts with NPM1; this interaction prevents interaction between NPM1 and HDM2. Weakly or undetectably expressed in normal organs. Up-regulated in renal cell carcinoma.

The protein resides in the nucleus. The protein localises to the nucleolus. It carries out the reaction ATP + H2O = ADP + phosphate + H(+). Its function is as follows. May have DNA helicase activity and RNA helicase activity. Probably have ssDNA and RNA dependent ATPase activity. Plays a role in ribosome biogenesis and TP53/p53 regulation through its interaction with NPM1. The protein is ATP-dependent DNA helicase DDX31 of Homo sapiens (Human).